The sequence spans 2123 residues: Toxin Afp18 (2123 aa).

Residues 864–919 (FFDNSDQDADQPRVRRKREMTDEIMLSDGSSRSEAKALPDENELDTDQSKSRPESA) form a disordered region. The interval 1771-2123 (VFDSANTNRS…GNSTQSSGLS (353 aa)) is tyrosine glycosyltransferase. UDP-N-acetyl-alpha-D-glucosamine is bound by residues 1850–1852 (IWV) and 1940–1941 (SD). Aspartate 1957 and aspartate 1959 together coordinate a divalent metal cation. The DxDD motif motif lies at 1957-1960 (DIDD). Asparagine 1993 is a UDP-N-acetyl-alpha-D-glucosamine binding site.

Requires a divalent metal cation as cofactor.

The protein localises to the secreted. It localises to the host cell membrane. The enzyme catalyses L-tyrosyl-[protein] + UDP-N-acetyl-alpha-D-glucosamine = O-(N-acetyl-alpha-D-glucosaminyl)-L-tyrosyl-[protein] + UDP + H(+). In terms of biological role, toxin component of the prophage tail-derived protein translocation system Afp, which is the causative agent of enteric redmouth disease in salmonid fish species. Mono-O-GlcNAcylates the small GTPase RhoA in eukaryotic host cells at Tyr-34, using UDP-N-acetylglucosamine (UDP-GlcNAc) as the sugar donor. Glycosylation of RhoA results in impaired effector and regulator interaction and inactivation of downstream RhoA signaling which leads to actin filament depolymerization and blocks cytokinesis and gastrulation during zebrafish embryo development. To a lesser extent, is also able to glycosylate other Rho family GTPases (RhoB, RhoC, Rac1, Rac2, Rac3, and Cdc42) in vitro at a switch I tyrosine residue, but not Ras proteins. This Yersinia ruckeri serotype O1 (strain ATCC 29473 / DSM 18506 / JCM 15110 / CCUG 14190 / NCIMB 2194 / NCTC 12986 / 2396-61) protein is Toxin Afp18.